Reading from the N-terminus, the 113-residue chain is Iron-sulfur cluster insertion protein ErpA (113 aa).

Residues cysteine 41, cysteine 105, and cysteine 107 each contribute to the iron-sulfur cluster site.

It belongs to the HesB/IscA family. In terms of assembly, homodimer. The cofactor is iron-sulfur cluster.

In terms of biological role, required for insertion of 4Fe-4S clusters for at least IspG. In Colwellia psychrerythraea (strain 34H / ATCC BAA-681) (Vibrio psychroerythus), this protein is Iron-sulfur cluster insertion protein ErpA.